We begin with the raw amino-acid sequence, 167 residues long: Gametocyte-specific factor 1 (167 aa).

Position 8 is a phosphoserine (S8). 2 CHHC U11-48K-type zinc fingers span residues 14-41 (LLQC…RKNH) and 48-75 (LATC…DDKS). Zn(2+) is bound by residues C17, H23, H33, C37, C51, H57, H67, and C71.

This sequence belongs to the UPF0224 (FAM112) family. Expressed abundantly in adult testis, at moderate levels in unfertilized eggs and ovaries and weakly in embryonic stem cells.

It is found in the cytoplasm. In terms of biological role, required for spermatogenesis and is involved in the suppression of retrotransposon transcription in male germ cells. This Mus musculus (Mouse) protein is Gametocyte-specific factor 1.